Here is a 493-residue protein sequence, read N- to C-terminus: Amphoterin-induced protein 1 (493 aa).

The signal sequence occupies residues 1–27; it reads MHPHRDPRGLWLLLPSLSLLLFEVARA. One can recognise an LRRNT domain in the interval 28–61; the sequence is GRAVVSCPAACLCASNILSCSKQQLPNVPHSLPS. Over 28-372 the chain is Extracellular; sequence GRAVVSCPAA…LHGHHDTLNT (345 aa). Intrachain disulfides connect C34–C40 and C38–C47. LRR repeat units lie at residues 62 to 83, 87 to 108, 111 to 132, 135 to 156, 159 to 179, and 186 to 206; these read YTAL…WTPT, QLHS…AFSP, NLRY…LFSD, VLEV…AFDD, QLQK…ELVK, and KLTL…PDLQ. An N-linked (GlcNAc...) asparagine glycan is attached at N72. The 52-residue stretch at 221–272 folds into the LRRCT domain; it reads NPLNCDCELYQLFSHWQYRQLSSVMDFQEDLYCMNSKKLHNVFNLSFLNCGE. Cystine bridges form between C225–C253, C227–C270, and C290–C341. N264, N315, N349, and N360 each carry an N-linked (GlcNAc...) asparagine glycan. The Ig-like C2-type domain occupies 269-353; the sequence is NCGEYKERAW…MGETFNETLS (85 aa). Residues 373-393 traverse the membrane as a helical segment; it reads AYTTLVGCILSVVLVLIYLYL. The Cytoplasmic portion of the chain corresponds to 394-493; it reads TPCRCWCRGV…SVFSDTPIVV (100 aa). The tract at residues 405–493 is disordered; that stretch reads KPSSHQGDSL…SVFSDTPIVV (89 aa). Over residues 408–424 the composition is skewed to polar residues; that stretch reads SHQGDSLSSSMLSTTPN. A compositionally biased stretch (basic and acidic residues) spans 431–442; it reads GDKDDGFDRRVA. Phosphoserine occurs at positions 477 and 481.

The protein belongs to the immunoglobulin superfamily. AMIGO family. As to quaternary structure, homodimer, and heterodimer with AMIGO2 and AMIGO3. Interacts with KCNB1.

The protein resides in the cell membrane. The protein localises to the perikaryon. Its subcellular location is the cell projection. It is found in the dendrite. It localises to the axon. In terms of biological role, promotes growth and fasciculation of neurites from cultured hippocampal neurons. May be involved in fasciculation as well as myelination of developing neural axons. May have a role in regeneration as well as neural plasticity in the adult nervous system. May mediate homophilic as well as heterophilic cell-cell interaction and contribute to signal transduction through its intracellular domain. Assembled with KCNB1 modulates the gating characteristics of the delayed rectifier voltage-dependent potassium channel KCNB1. In Homo sapiens (Human), this protein is Amphoterin-induced protein 1.